We begin with the raw amino-acid sequence, 1114 residues long: Zinc finger E-box-binding homeobox 1 (1114 aa).

2 disordered regions span residues 1 to 105 (MADG…EVGC) and 142 to 163 (APEE…NGTP). Residues 15–30 (PRRNNVTNYNNVIEAN) are compositionally biased toward low complexity. Positions 149 to 160 (QGTPEASGQDEN) are enriched in polar residues. 3 C2H2-type zinc fingers span residues 170–193 (LTCP…KYRH), 200–222 (FSCS…MTSH), and 240–262 (FKCT…LRIH). The C2H2-type 4; atypical zinc finger occupies 268-292 (YECPNCKKRFSHSGSYSSHISSKKC). 4 disordered regions span residues 304–326 (SGLK…PARP), 491–529 (NLKK…TNDS), 553–588 (KNPP…GQPP), and 636–716 (QISV…SRNS). A compositionally biased stretch (low complexity) spans 309-326 (SQCSSPSLSASPGSPARP). Residues 504–523 (KNEKLPEDLTVKSEKDKNFE) show a composition bias toward basic and acidic residues. 2 stretches are compositionally biased toward polar residues: residues 573-584 (APSETGENNLSP) and 636-681 (QISV…QNPA). The segment at residues 581 to 640 (NLSPGQPPLKNLLSLLKAYYALNAQPSAEELSKIADSVNLPLDVVKKWFEKMQAGQISVQ) is a DNA-binding region (homeobox; atypical). The segment covering 682–716 (NTSKSQTSSGGSTQNGSRSSTPSPSPLNLSSSRNS) has biased composition (low complexity). The CTBP-binding motif motif lies at 767–771 (PLNLT). Polar residues-rich tracts occupy residues 852–866 (AVQE…ANGS) and 874–890 (SSEG…SDST). Residues 852-898 (AVQETPPKQTQANGSQDERQDTSSEGVSNVEDQNDSDSTPPKKKMRK) form a disordered region. 2 C2H2-type zinc fingers span residues 904–926 (YACD…KYEH) and 932–954 (HECG…MRLH). The segment at 960–981 (YQCDKCGKRFSHSGSYSQHMNH) adopts a C2H2-type 7; atypical zinc-finger fold. Residues 989-1114 (EAEERDSTEQ…QVSEEKTNKA (126 aa)) are disordered. Residues 1031 to 1047 (EEEEDSEKEEEEEEEKD) are compositionally biased toward acidic residues. A compositionally biased stretch (basic and acidic residues) spans 1048-1062 (VEGLQEEKECRKLQD). Positions 1063-1078 (VEEEEEVEEEEEEEEG) are enriched in acidic residues. Basic and acidic residues predominate over residues 1079–1089 (KTEGNKNDDVV).

Belongs to the delta-EF1/ZFH-1 C2H2-type zinc-finger family. In terms of tissue distribution, expression is developmentally regulated with high expression in mesoderm, nervous system and lens.

The protein resides in the nucleus. Functionally, acts as a transcriptional repressor. Positively regulates neuronal differentiation. Represses transcription by binding to the E box-containing promoter. Binds to delta 1-crystallin enhancer core and represses lens-specific transcription. It also binds many other non-lens specific DNA sequences. The protein is Zinc finger E-box-binding homeobox 1 (ZEB1) of Gallus gallus (Chicken).